A 192-amino-acid polypeptide reads, in one-letter code: Protein GrpE (192 aa).

The tract at residues 1-41 (MSKEEFPHEKDLKDEVTPDKAPKKDPKAAPKEEVKENPVEN) is disordered.

It belongs to the GrpE family. In terms of assembly, homodimer.

The protein resides in the cytoplasm. Its function is as follows. Participates actively in the response to hyperosmotic and heat shock by preventing the aggregation of stress-denatured proteins, in association with DnaK and GrpE. It is the nucleotide exchange factor for DnaK and may function as a thermosensor. Unfolded proteins bind initially to DnaJ; upon interaction with the DnaJ-bound protein, DnaK hydrolyzes its bound ATP, resulting in the formation of a stable complex. GrpE releases ADP from DnaK; ATP binding to DnaK triggers the release of the substrate protein, thus completing the reaction cycle. Several rounds of ATP-dependent interactions between DnaJ, DnaK and GrpE are required for fully efficient folding. This chain is Protein GrpE, found in Lactobacillus johnsonii (strain CNCM I-12250 / La1 / NCC 533).